The sequence spans 75 residues: Small ribosomal subunit protein bS18 (75 aa).

This sequence belongs to the bacterial ribosomal protein bS18 family. Part of the 30S ribosomal subunit. Forms a tight heterodimer with protein bS6.

Functionally, binds as a heterodimer with protein bS6 to the central domain of the 16S rRNA, where it helps stabilize the platform of the 30S subunit. This chain is Small ribosomal subunit protein bS18, found in Moorella thermoacetica (strain ATCC 39073 / JCM 9320).